The chain runs to 260 residues: Thiazole synthase (260 aa).

Lysine 96 functions as the Schiff-base intermediate with DXP in the catalytic mechanism. 1-deoxy-D-xylulose 5-phosphate is bound by residues glycine 157, alanine 184 to glycine 185, and asparagine 206 to threonine 207.

This sequence belongs to the ThiG family. Homotetramer. Forms heterodimers with either ThiH or ThiS.

It is found in the cytoplasm. The enzyme catalyses [ThiS sulfur-carrier protein]-C-terminal-Gly-aminoethanethioate + 2-iminoacetate + 1-deoxy-D-xylulose 5-phosphate = [ThiS sulfur-carrier protein]-C-terminal Gly-Gly + 2-[(2R,5Z)-2-carboxy-4-methylthiazol-5(2H)-ylidene]ethyl phosphate + 2 H2O + H(+). It participates in cofactor biosynthesis; thiamine diphosphate biosynthesis. Catalyzes the rearrangement of 1-deoxy-D-xylulose 5-phosphate (DXP) to produce the thiazole phosphate moiety of thiamine. Sulfur is provided by the thiocarboxylate moiety of the carrier protein ThiS. In vitro, sulfur can be provided by H(2)S. The protein is Thiazole synthase of Nitrobacter winogradskyi (strain ATCC 25391 / DSM 10237 / CIP 104748 / NCIMB 11846 / Nb-255).